Here is a 201-residue protein sequence, read N- to C-terminus: Recombination protein RecR (201 aa).

The segment at 60 to 75 (CATCGNFDTVQPCAVC) adopts a C4-type zinc-finger fold. The region spanning 83-178 (GIICVVEDVP…DVTRLAHGVP (96 aa)) is the Toprim domain.

The protein belongs to the RecR family.

May play a role in DNA repair. It seems to be involved in an RecBC-independent recombinational process of DNA repair. It may act with RecF and RecO. The sequence is that of Recombination protein RecR from Hyphomonas neptunium (strain ATCC 15444).